Here is an 880-residue protein sequence, read N- to C-terminus: Alanine--tRNA ligase (880 aa).

Zn(2+)-binding residues include His567, His571, Cys669, and His673.

The protein belongs to the class-II aminoacyl-tRNA synthetase family. The cofactor is Zn(2+).

It is found in the cytoplasm. It carries out the reaction tRNA(Ala) + L-alanine + ATP = L-alanyl-tRNA(Ala) + AMP + diphosphate. In terms of biological role, catalyzes the attachment of alanine to tRNA(Ala) in a two-step reaction: alanine is first activated by ATP to form Ala-AMP and then transferred to the acceptor end of tRNA(Ala). Also edits incorrectly charged Ser-tRNA(Ala) and Gly-tRNA(Ala) via its editing domain. The polypeptide is Alanine--tRNA ligase (Bacillus anthracis).